Here is a 270-residue protein sequence, read N- to C-terminus: Mediator of RNA polymerase II transcription subunit 4 (270 aa).

Positions 1–22 (MAASSSGEKEKERMGGVSGMTG) are disordered. Ala-2 bears the N-acetylalanine mark. A coiled-coil region spans residues 26–131 (TRERLLSALE…ATAVYQAKEK (106 aa)). Residue Ser-32 is modified to Phosphoserine. The segment at 227-270 (MSVNMLPPNHSTDFLLEPPGHNKENEDDVEVMSTDSSSSSSDSD) is disordered. A compositionally biased stretch (low complexity) spans 259-270 (STDSSSSSSDSD).

The protein belongs to the Mediator complex subunit 4 family. As to quaternary structure, component of the Mediator complex, which is composed of MED1, MED4, MED6, MED7, MED8, MED9, MED10, MED11, MED12, MED13, MED13L, MED14, MED15, MED16, MED17, MED18, MED19, MED20, MED21, MED22, MED23, MED24, MED25, MED26, MED27, MED29, MED30, MED31, CCNC, CDK8 and CDC2L6/CDK11. The MED12, MED13, CCNC and CDK8 subunits form a distinct module termed the CDK8 module. Mediator containing the CDK8 module is less active than Mediator lacking this module in supporting transcriptional activation. Individual preparations of the Mediator complex lacking one or more distinct subunits have been variously termed ARC, CRSP, DRIP, PC2, SMCC and TRAP.

It is found in the nucleus. In terms of biological role, component of the Mediator complex, a coactivator involved in the regulated transcription of nearly all RNA polymerase II-dependent genes. Mediator functions as a bridge to convey information from gene-specific regulatory proteins to the basal RNA polymerase II transcription machinery. Mediator is recruited to promoters by direct interactions with regulatory proteins and serves as a scaffold for the assembly of a functional preinitiation complex with RNA polymerase II and the general transcription factors. The protein is Mediator of RNA polymerase II transcription subunit 4 (Med4) of Rattus norvegicus (Rat).